A 91-amino-acid chain; its full sequence is Uteroglobin (91 aa).

Positions 1–21 (MKLTITLALVTLALLCSPASA) are cleaved as a signal peptide.

It belongs to the secretoglobin family. Antiparallel homodimer; disulfide-linked. Interaction with LMBR1L is controversial.

It is found in the secreted. Its function is as follows. Uteroglobin binds progesterone specifically and with high affinity. It may regulate progesterone concentrations reaching the blastocyst. It is also a potent inhibitor of phospholipase A2. The chain is Uteroglobin (SCGB1A1) from Lepus capensis (Brown hare).